The primary structure comprises 303 residues: Putative S-adenosyl-L-methionine-dependent methyltransferase SCO6443 (303 aa).

S-adenosyl-L-methionine contacts are provided by residues Asp-130 and 159–160; that span reads DL.

This sequence belongs to the UPF0677 family.

Its function is as follows. Exhibits S-adenosyl-L-methionine-dependent methyltransferase activity. In Streptomyces coelicolor (strain ATCC BAA-471 / A3(2) / M145), this protein is Putative S-adenosyl-L-methionine-dependent methyltransferase SCO6443.